Here is a 213-residue protein sequence, read N- to C-terminus: 3-demethoxyubiquinol 3-hydroxylase (213 aa).

Residues Glu-62, Glu-92, His-95, Glu-144, Glu-176, and His-179 each contribute to the Fe cation site.

Belongs to the COQ7 family. The cofactor is Fe cation.

It localises to the cell membrane. The catalysed reaction is a 5-methoxy-2-methyl-3-(all-trans-polyprenyl)benzene-1,4-diol + AH2 + O2 = a 3-demethylubiquinol + A + H2O. It functions in the pathway cofactor biosynthesis; ubiquinone biosynthesis. In terms of biological role, catalyzes the hydroxylation of 2-nonaprenyl-3-methyl-6-methoxy-1,4-benzoquinol during ubiquinone biosynthesis. This Legionella pneumophila subsp. pneumophila (strain Philadelphia 1 / ATCC 33152 / DSM 7513) protein is 3-demethoxyubiquinol 3-hydroxylase.